The chain runs to 162 residues: Caveolin-2 (162 aa).

The Cytoplasmic portion of the chain corresponds to 1–86 (MGLETEKADV…FEISKYVIYK (86 aa)). Y19 carries the phosphotyrosine; by SRC modification. 2 positions are modified to phosphoserine: S20 and S23. The residue at position 27 (Y27) is a Phosphotyrosine; by SRC. S36 carries the post-translational modification Phosphoserine. An intramembrane region (helical) is located at residues 87–107 (FLTFFLAIPMAFAAGILFAIL). Residues 108 to 162 (SCLHIWIIMPFVKTCLMVLPSVQTIWKTITDVVIAPLCTSVGRSFSSISLQLSHD) lie on the Cytoplasmic side of the membrane.

This sequence belongs to the caveolin family. As to quaternary structure, monomer or homodimer. Interacts with CAV1; the interaction forms a stable heterooligomeric complex that is required for targeting to lipid rafts and for caveolae formation. Tyrosine phosphorylated forms do not form heterooligomers with the Tyr-19-phosphorylated form existing as a monomer or dimer, and the Tyr-27-form as a monomer only. Interacts (tyrosine phosphorylated form) with the SH2 domain-containing proteins, RASA1, NCK1 and SRC. Interacts (tyrosine phosphorylated form) with INSR, the interaction (Tyr-27-phosphorylated form) is increased on insulin stimulation. Interacts (Tyr-19 phosphorylated form) with MAPK1 (phosphorylated form); the interaction, promoted by insulin, leads to nuclear location and MAPK1 activation. Interacts with STAT3; the interaction is increased on insulin-induced tyrosine phosphorylation leading to STAT activation. Phosphorylated on serine and tyrosine residues. CAV1 promotes phosphorylation on Ser-23 which then targets the complex to the plasma membrane, lipid rafts and caveolae. Phosphorylation on Ser-36 appears to modulate mitosis in endothelial cells. Phosphorylation on both Tyr-19 and Tyr-27 is required for insulin-induced 'Ser-727' phosphorylation of STAT3 and its activation. Phosphorylation on Tyr-19 is required for insulin-induced phosphorylation of MAPK1 and DNA binding of STAT3. Tyrosine phosphorylation is induced by both EGF and insulin (By. similarity).

It is found in the nucleus. The protein resides in the cytoplasm. The protein localises to the golgi apparatus membrane. It localises to the cell membrane. Its subcellular location is the membrane. It is found in the caveola. Its function is as follows. May act as a scaffolding protein within caveolar membranes. Interacts directly with G-protein alpha subunits and can functionally regulate their activity. Acts as an accessory protein in conjunction with CAV1 in targeting to lipid rafts and driving caveolae formation. The Ser-36 phosphorylated form has a role in modulating mitosis in endothelial cells. Positive regulator of cellular mitogenesis of the MAPK signaling pathway. Required for the insulin-stimulated nuclear translocation and activation of MAPK1 and STAT3, and the subsequent regulation of cell cycle progression. The chain is Caveolin-2 (CAV2) from Mustela putorius furo (European domestic ferret).